Consider the following 497-residue polypeptide: Glutamate--tRNA ligase (497 aa).

The short motif at 12–22 (PSPTGHLHIGN) is the 'HIGH' region element. The short motif at 259-263 (KLSKR) is the 'KMSKS' region element. Position 262 (lysine 262) interacts with ATP.

It belongs to the class-I aminoacyl-tRNA synthetase family. Glutamate--tRNA ligase type 1 subfamily. As to quaternary structure, monomer.

Its subcellular location is the cytoplasm. The catalysed reaction is tRNA(Glu) + L-glutamate + ATP = L-glutamyl-tRNA(Glu) + AMP + diphosphate. Catalyzes the attachment of glutamate to tRNA(Glu) in a two-step reaction: glutamate is first activated by ATP to form Glu-AMP and then transferred to the acceptor end of tRNA(Glu). The sequence is that of Glutamate--tRNA ligase from Lacticaseibacillus casei (strain BL23) (Lactobacillus casei).